A 367-amino-acid polypeptide reads, in one-letter code: Developmentally-regulated GTP-binding protein 1 (367 aa).

Residue Ser-2 is modified to N-acetylserine. The required for interaction with STK16 stretch occupies residues 2–16 (SSTLAKIAEIEAEMA). (3S)-3-hydroxylysine is present on Lys-22. The OBG-type G domain maps to 65 to 290 (ARIGFVGFPS…LLEKIWDYLK (226 aa)). GTP contacts are provided by residues 71-78 (GFPSVGKS), 96-100 (FTTLT), 117-120 (DLPG), 248-251 (NKID), and 271-273 (SAH). Ser-78 and Thr-98 together coordinate Mg(2+). At Thr-100 the chain carries Phosphothreonine; by STK16. In terms of domain architecture, TGS spans 290-366 (KLVRIYTKPK…EDEDVIQIVK (77 aa)).

It belongs to the TRAFAC class OBG-HflX-like GTPase superfamily. OBG GTPase family. In terms of assembly, interacts (via its C-terminal) with TAL1. Interacts with DFRP1/ZC3H15; this interaction prevents DRG1 poly-ubiquitination and degradation by proteasome. DRG1-ZC3H15/DFRP1 complex co-sediments with polysomes. Interacts with STK16. Interacts with JMJD7. Sumoylated by UBE2I in response to MEKK1-mediated stimuli. Post-translationally, hydroxylated (with S stereochemistry) at C-3 of Lys-22 by JMJD7. In terms of processing, phosphorylated at Thr-100 by STK16. Polyubiquitinated; this modification induces proteolytic degradation and is impaired by interaction with ZC3H15.

The protein resides in the nucleus. It is found in the cytoplasm. It catalyses the reaction GTP + H2O = GDP + phosphate + H(+). The GTPase activity is enhanced by potassium ions as well as by DFRP1 binding. Its function is as follows. Catalyzes the conversion of GTP to GDP through hydrolysis of the gamma-phosphate bond in GTP. Appears to have an intrinsic GTPase activity that is stimulated by ZC3H15/DFRP1 binding likely by increasing the affinity for the potassium ions. When hydroxylated at C-3 of 'Lys-22' by JMJD7, may bind to RNA and play a role in translation. Binds to microtubules and promotes microtubule polymerization and bundling that are required for mitotic spindle assembly during prophase to anaphase transition. GTPase activity is not necessary for these microtubule-related functions. The chain is Developmentally-regulated GTP-binding protein 1 (DRG1) from Bos taurus (Bovine).